The primary structure comprises 276 residues: RRP15-like protein (276 aa).

Disordered regions lie at residues 1–132 (MALL…QLRV) and 201–276 (KRAK…DGEE). Basic and acidic residues-rich tracts occupy residues 75-95 (FQKD…KADV) and 226-245 (KGSS…DFMT). Acidic residues predominate over residues 254 to 276 (EEDDDEEGHNDEADDSDYDDGEE). Position 269 is a phosphoserine (Ser269). The residue at position 271 (Tyr271) is a Phosphotyrosine.

It belongs to the RRP15 family.

In Drosophila melanogaster (Fruit fly), this protein is RRP15-like protein.